The following is a 481-amino-acid chain: ATP synthase subunit beta (481 aa).

Residue 167–174 (GGAGVGKT) coordinates ATP.

The protein belongs to the ATPase alpha/beta chains family. In terms of assembly, F-type ATPases have 2 components, CF(1) - the catalytic core - and CF(0) - the membrane proton channel. CF(1) has five subunits: alpha(3), beta(3), gamma(1), delta(1), epsilon(1). CF(0) has three main subunits: a(1), b(2) and c(9-12). The alpha and beta chains form an alternating ring which encloses part of the gamma chain. CF(1) is attached to CF(0) by a central stalk formed by the gamma and epsilon chains, while a peripheral stalk is formed by the delta and b chains.

It is found in the cell membrane. It carries out the reaction ATP + H2O + 4 H(+)(in) = ADP + phosphate + 5 H(+)(out). Its function is as follows. Produces ATP from ADP in the presence of a proton gradient across the membrane. The catalytic sites are hosted primarily by the beta subunits. In Corynebacterium efficiens (strain DSM 44549 / YS-314 / AJ 12310 / JCM 11189 / NBRC 100395), this protein is ATP synthase subunit beta.